We begin with the raw amino-acid sequence, 355 residues long: uncharacterized protein (355 aa).

It belongs to the serpin family. Poxviruses subfamily.

This is an uncharacterized protein from Vertebrata (FPV).